A 73-amino-acid polypeptide reads, in one-letter code: Small ribosomal subunit protein bS18 (73 aa).

The protein belongs to the bacterial ribosomal protein bS18 family. Part of the 30S ribosomal subunit. Forms a tight heterodimer with protein bS6.

In terms of biological role, binds as a heterodimer with protein bS6 to the central domain of the 16S rRNA, where it helps stabilize the platform of the 30S subunit. The chain is Small ribosomal subunit protein bS18 from Neorickettsia sennetsu (strain ATCC VR-367 / Miyayama) (Ehrlichia sennetsu).